The primary structure comprises 286 residues: Pantothenate synthetase (286 aa).

ATP is bound at residue 30 to 37 (MGALHEGH). His-37 functions as the Proton donor in the catalytic mechanism. Gln-61 is a (R)-pantoate binding site. A beta-alanine-binding site is contributed by Gln-61. Position 147–150 (147–150 (GEKD)) interacts with ATP. Gln-153 contacts (R)-pantoate. Residues Val-180 and 188 to 191 (LSSR) contribute to the ATP site.

Belongs to the pantothenate synthetase family. Homodimer.

The protein resides in the cytoplasm. It catalyses the reaction (R)-pantoate + beta-alanine + ATP = (R)-pantothenate + AMP + diphosphate + H(+). It functions in the pathway cofactor biosynthesis; (R)-pantothenate biosynthesis; (R)-pantothenate from (R)-pantoate and beta-alanine: step 1/1. Functionally, catalyzes the condensation of pantoate with beta-alanine in an ATP-dependent reaction via a pantoyl-adenylate intermediate. This Novosphingobium aromaticivorans (strain ATCC 700278 / DSM 12444 / CCUG 56034 / CIP 105152 / NBRC 16084 / F199) protein is Pantothenate synthetase.